A 458-amino-acid chain; its full sequence is Ribulose bisphosphate carboxylase (458 aa).

Position 111 (Asn111) interacts with substrate. Residue Lys166 is the Proton acceptor of the active site. Lys168 contributes to the substrate binding site. Positions 191, 193, and 194 each coordinate Mg(2+). Lys191 is subject to N6-carboxylysine. The Proton acceptor role is filled by His287. 3 residues coordinate substrate: Arg288, His321, and Ser368.

It belongs to the RuBisCO large chain family. Type II subfamily. In terms of assembly, homodimer. Requires Mg(2+) as cofactor.

The catalysed reaction is 2 (2R)-3-phosphoglycerate + 2 H(+) = D-ribulose 1,5-bisphosphate + CO2 + H2O. It catalyses the reaction D-ribulose 1,5-bisphosphate + O2 = 2-phosphoglycolate + (2R)-3-phosphoglycerate + 2 H(+). Functionally, ruBisCO catalyzes two reactions: the carboxylation of D-ribulose 1,5-bisphosphate, the primary event in carbon dioxide fixation, as well as the oxidative fragmentation of the pentose substrate. Both reactions occur simultaneously and in competition at the same active site. In Rhodobacter capsulatus (strain ATCC BAA-309 / NBRC 16581 / SB1003), this protein is Ribulose bisphosphate carboxylase (cbbM).